We begin with the raw amino-acid sequence, 100 residues long: MAKKSMIEREKKRAKLVEKYSEKREALLEEFRTTESPLEKLEIHRQIQQLPRNSAPNRRRNRCWVTGRPRGVYRDFGLSRNVLREWAHEGLLPGVVKSSW.

Belongs to the universal ribosomal protein uS14 family. In terms of assembly, part of the 30S ribosomal subunit. Contacts proteins S3 and S10.

In terms of biological role, binds 16S rRNA, required for the assembly of 30S particles and may also be responsible for determining the conformation of the 16S rRNA at the A site. This chain is Small ribosomal subunit protein uS14, found in Nostoc sp. (strain PCC 7120 / SAG 25.82 / UTEX 2576).